The sequence spans 327 residues: 4-hydroxyproline 2-epimerase (327 aa).

Catalysis depends on C85, which acts as the Proton acceptor. Residues 86-87 (GH), H205, and D231 each bind substrate. Residue C235 is the Proton donor of the active site. Substrate is bound at residue 236–237 (GT).

This sequence belongs to the proline racemase family.

The enzyme catalyses trans-4-hydroxy-L-proline = cis-4-hydroxy-D-proline. Its function is as follows. Catalyzes the epimerization of trans-4-hydroxy-L-proline (t4LHyp) to cis-4-hydroxy-D-proline (c4DHyp). Displays no proline racemase activity. The chain is 4-hydroxyproline 2-epimerase from Roseibium alexandrii (strain DSM 17067 / NCIMB 14079 / DFL-11) (Labrenzia alexandrii).